The chain runs to 917 residues: Smoothelin (917 aa).

Ala-2 bears the N-acetylalanine mark. A coiled-coil region spans residues 24–89; it reads LAERRRIRSA…ARLAGQLESM (66 aa). The segment at 157-456 is disordered; it reads EVPEREEQEQ…AVGTAEPGGS (300 aa). The span at 177–188 shows a compositional bias: polar residues; sequence PEGTSQDVTTVT. 2 stretches are compositionally biased toward low complexity: residues 193–210 and 220–232; these read APPGSTSSSPASPSSSPT and PAEAQCLTAEVPG. A compositionally biased stretch (pro residues) spans 233 to 243; sequence SPEPPPSPPKT. Low complexity predominate over residues 244–258; the sequence is TSPEPQESPTLPSTE. Positions 298–326 are enriched in polar residues; sequence RSLSVLSPRQPAQNRESTPLASGPSSFQR. Residues Ser-299, Ser-301, and Ser-304 each carry the phosphoserine modification. Residues 329-338 are compositionally biased toward basic and acidic residues; it reads SVRDRVHKFT. Ser-341 is subject to Phosphoserine. Thr-351 is modified (phosphothreonine). Phosphoserine is present on Ser-357. 2 positions are modified to phosphothreonine: Thr-360 and Thr-373. Positions 363–392 are enriched in low complexity; sequence RLLGPSLTSTTPASSSSGSSSRGPSDTSSR. Residues Ser-503, Ser-514, Ser-523, and Ser-576 each carry the phosphoserine modification. 2 disordered regions span residues 560-580 and 617-767; these read ANGAEQTRVNKAPEGRSPLSA and QRKR…RKAM. A coiled-coil region spans residues 603 to 630; sequence EERKLIRAALRELRQRKRDQRDKERERR. A compositionally biased stretch (basic and acidic residues) spans 617–640; it reads QRKRDQRDKERERRLQEARGRPGE. The span at 676 to 689 shows a compositional bias: polar residues; the sequence is NDGTRTARTTTVES. A compositionally biased stretch (low complexity) spans 701 to 720; the sequence is STMMQTKTFSSSSSSKKMGS. Residue Ser-729 is modified to Phosphoserine. The span at 738–750 shows a compositional bias: basic and acidic residues; sequence LEKRQAEKKKELM. The residue at position 792 (Ser-792) is a Phosphoserine. Positions 799–906 constitute a Calponin-homology (CH) domain; that stretch reads NSIKQMLLDW…YVQSLYNHLR (108 aa).

This sequence belongs to the smoothelin family. In terms of tissue distribution, smooth muscle; contractile or vascular (for the long form).

Its subcellular location is the cytoplasm. It is found in the cytoskeleton. Functionally, structural protein of the cytoskeleton. The protein is Smoothelin (SMTN) of Homo sapiens (Human).